We begin with the raw amino-acid sequence, 488 residues long: Dipeptide and tripeptide permease B (488 aa).

The Cytoplasmic segment spans residues 1–27; it reads MSKTASVGLWDQPKPFFMIFFVELWER. A helical membrane pass occupies residues 28-48; it reads FGFYGVQGILAIYFVQQLGFS. The Periplasmic portion of the chain corresponds to 49 to 52; the sequence is EEQS. The helical transmembrane segment at 53 to 73 threads the bilayer; the sequence is FITFGAFTALVYGLISVGGYV. At 74–82 the chain is on the cytoplasmic side; it reads GDHILGTKR. The chain crosses the membrane as a helical span at residues 83 to 103; that stretch reads TIVLGAIVMAIGYYMIGLSIM. Residues 104-106 lie on the Periplasmic side of the membrane; sequence KPE. A helical transmembrane segment spans residues 107–127; it reads LIFYALGTVAVGNGLFKANPA. Residues 128–146 lie on the Cytoplasmic side of the membrane; that stretch reads SLLAKCYQPQDPRLDGAFT. The chain crosses the membrane as a helical span at residues 147–167; that stretch reads LFYMSINLGSLFSLSLAPVIA. Topologically, residues 168-172 are periplasmic; it reads EKYGY. Residues 173–193 traverse the membrane as a helical segment; sequence TVTYNICGIGLIIALLVYIAC. Topologically, residues 194–211 are cytoplasmic; that stretch reads RRMVHNIGSAPDHHPVKP. Residues 212-232 traverse the membrane as a helical segment; sequence IGLIAVLIGSVVMVGVCAWLL. The Periplasmic segment spans residues 233–234; that stretch reads HN. Residues 235-255 traverse the membrane as a helical segment; the sequence is IKVANIALFAITTIVVLIFFW. Residues 256–267 are Cytoplasmic-facing; sequence QAFKQNRVGRNK. A helical transmembrane segment spans residues 268-288; the sequence is MFVAFILMLQAVVFFILYNQM. Residues 289–311 are Periplasmic-facing; the sequence is PMSLNFFAINNVHHQILGFDVNP. The chain crosses the membrane as a helical span at residues 312 to 332; sequence VSFQAFNPFWIIIVSPILAVV. The Cytoplasmic portion of the chain corresponds to 333-348; it reads YTKLGAKGKDFSMPAK. The helical transmembrane segment at 349–369 threads the bilayer; sequence FTFGMFLCSLGFLTAAASGLF. Over 370-378 the chain is Periplasmic; it reads ADAQGITSP. A helical membrane pass occupies residues 379–399; it reads WFIVLVYLFQSVGELMISALG. At 400 to 423 the chain is on the cytoplasmic side; sequence LAMVAAFVPSYLTGFILGMWFLSQ. A helical transmembrane segment spans residues 424 to 444; that stretch reads AVASMLASHVAALTATPVGVT. The Periplasmic segment spans residues 445–455; that stretch reads DPLQTLPIYMS. The helical transmembrane segment at 456–476 threads the bilayer; sequence VFGKIGVATLIVAIIMTFMVP. Residues 477 to 488 lie on the Cytoplasmic side of the membrane; the sequence is WLNRIMREEVKA.

This sequence belongs to the major facilitator superfamily. Proton-dependent oligopeptide transporter (POT/PTR) (TC 2.A.17) family. DtpB subfamily.

Its subcellular location is the cell inner membrane. Functionally, proton-dependent permease that transports di- and tripeptides. In Xenorhabdus bovienii (strain SS-2004) (Xenorhabdus nematophila subsp. bovienii), this protein is Dipeptide and tripeptide permease B.